The sequence spans 93 residues: Small ribosomal subunit protein uS19 (93 aa).

It belongs to the universal ribosomal protein uS19 family.

Its function is as follows. Protein S19 forms a complex with S13 that binds strongly to the 16S ribosomal RNA. The polypeptide is Small ribosomal subunit protein uS19 (Ehrlichia chaffeensis (strain ATCC CRL-10679 / Arkansas)).